A 241-amino-acid polypeptide reads, in one-letter code: Large ribosomal subunit protein uL3 (241 aa).

The interval 140–168 (SHRSIGSTGGRQDPGKTFKNKKMPGHMGD) is disordered. Position 151 is an N5-methylglutamine (glutamine 151).

Belongs to the universal ribosomal protein uL3 family. Part of the 50S ribosomal subunit. Forms a cluster with proteins L14 and L19. In terms of processing, methylated by PrmB.

Its function is as follows. One of the primary rRNA binding proteins, it binds directly near the 3'-end of the 23S rRNA, where it nucleates assembly of the 50S subunit. The protein is Large ribosomal subunit protein uL3 of Azorhizobium caulinodans (strain ATCC 43989 / DSM 5975 / JCM 20966 / LMG 6465 / NBRC 14845 / NCIMB 13405 / ORS 571).